The following is a 21-amino-acid chain: Glucan endo-1,3-beta-glucosidase 2 (21 aa).

The disordered stretch occupies residues 1 to 21 (APGDLLWSDEFDGAAGSAPNP).

It carries out the reaction Hydrolysis of (1-&gt;3)-beta-D-glucosidic linkages in (1-&gt;3)-beta-D-glucans.. This Papiliotrema laurentii (Cryptococcus laurentii) protein is Glucan endo-1,3-beta-glucosidase 2.